The sequence spans 357 residues: U5 small nuclear ribonucleoprotein 40 kDa protein (357 aa).

A Glycyl lysine isopeptide (Lys-Gly) (interchain with G-Cter in SUMO2) cross-link involves residue lysine 18. Arginine 21 is subject to Asymmetric dimethylarginine. WD repeat units lie at residues 64 to 103, 107 to 146, 149 to 189, 191 to 230, 233 to 272, 283 to 322, and 325 to 357; these read GHEG…DNYA, GHSG…RVKR, GHTS…AIQT, QNTY…LTYT, GHAD…PKER, NFEK…ILYK, and GHAG…GEIQ. Residue lysine 270 forms a Glycyl lysine isopeptide (Lys-Gly) (interchain with G-Cter in SUMO2) linkage.

In terms of assembly, component of the pre-catalytic and catalytic spliceosome complexes. Component of the postcatalytic spliceosome P complex. Part of the U5 snRNP complex. Interacts with PRPF8. Component of the U4/U6-U5 tri-snRNP complex composed of the U4, U6 and U5 snRNAs and at least PRPF3, PRPF4, PRPF6, PRPF8, PRPF31, SNRNP200, TXNL4A, WDR57, SNRNP40, DDX23, CD2BP2, PPIH, SNU13, EFTUD2, SART1 and USP39. Component of the minor spliceosome, which splices U12-type introns.

The protein localises to the nucleus. Functionally, required for pre-mRNA splicing as component of the activated spliceosome. Component of the U5 small nuclear ribonucleoprotein (snRNP) complex and the U4/U6-U5 tri-snRNP complex, building blocks of the spliceosome. As a component of the minor spliceosome, involved in the splicing of U12-type introns in pre-mRNAs. This chain is U5 small nuclear ribonucleoprotein 40 kDa protein (SNRNP40), found in Homo sapiens (Human).